The following is a 303-amino-acid chain: mRNA-capping enzyme subunit beta (303 aa).

This sequence belongs to the fungal TPase family. In terms of assembly, heterodimer. The mRNA-capping enzyme is composed of two separate chains alpha and beta, respectively a mRNA guanylyltransferase and an mRNA 5'-triphosphate monophosphatase. The cofactor is Mg(2+).

It is found in the nucleus. The catalysed reaction is a 5'-end triphospho-ribonucleoside in mRNA + H2O = a 5'-end diphospho-ribonucleoside in mRNA + phosphate + H(+). Its function is as follows. First step of mRNA capping. Converts the 5'-triphosphate end of a nascent mRNA chain into a diphosphate end. This Schizosaccharomyces pombe (strain 972 / ATCC 24843) (Fission yeast) protein is mRNA-capping enzyme subunit beta (pct1).